The sequence spans 51 residues: Small ribosomal subunit protein eS31 (51 aa).

Positions 21, 24, 39, and 42 each coordinate Zn(2+). Residues 21–42 (CPRCGPGVFLAEHEDRFSCGRC) form a C4-type zinc finger.

It belongs to the eukaryotic ribosomal protein eS31 family. Part of the 30S ribosomal subunit. Requires Zn(2+) as cofactor.

The protein is Small ribosomal subunit protein eS31 of Picrophilus torridus (strain ATCC 700027 / DSM 9790 / JCM 10055 / NBRC 100828 / KAW 2/3).